The following is a 134-amino-acid chain: 6,7-dimethyl-8-ribityllumazine synthase (134 aa).

Residues F12, 44–46 (VFD), and 68–70 (SVI) each bind 5-amino-6-(D-ribitylamino)uracil. 73–74 (ET) provides a ligand contact to (2S)-2-hydroxy-3-oxobutyl phosphate. The Proton donor role is filled by H76. Position 101 (L101) interacts with 5-amino-6-(D-ribitylamino)uracil. Residue R116 coordinates (2S)-2-hydroxy-3-oxobutyl phosphate.

This sequence belongs to the DMRL synthase family.

The enzyme catalyses (2S)-2-hydroxy-3-oxobutyl phosphate + 5-amino-6-(D-ribitylamino)uracil = 6,7-dimethyl-8-(1-D-ribityl)lumazine + phosphate + 2 H2O + H(+). The protein operates within cofactor biosynthesis; riboflavin biosynthesis; riboflavin from 2-hydroxy-3-oxobutyl phosphate and 5-amino-6-(D-ribitylamino)uracil: step 1/2. Its function is as follows. Catalyzes the formation of 6,7-dimethyl-8-ribityllumazine by condensation of 5-amino-6-(D-ribitylamino)uracil with 3,4-dihydroxy-2-butanone 4-phosphate. This is the penultimate step in the biosynthesis of riboflavin. In Methanosarcina mazei (strain ATCC BAA-159 / DSM 3647 / Goe1 / Go1 / JCM 11833 / OCM 88) (Methanosarcina frisia), this protein is 6,7-dimethyl-8-ribityllumazine synthase.